We begin with the raw amino-acid sequence, 230 residues long: Large ribosomal subunit protein uL1 (230 aa).

It belongs to the universal ribosomal protein uL1 family. Part of the 50S ribosomal subunit.

In terms of biological role, binds directly to 23S rRNA. The L1 stalk is quite mobile in the ribosome, and is involved in E site tRNA release. Its function is as follows. Protein L1 is also a translational repressor protein, it controls the translation of the L11 operon by binding to its mRNA. The polypeptide is Large ribosomal subunit protein uL1 (Afipia carboxidovorans (strain ATCC 49405 / DSM 1227 / KCTC 32145 / OM5) (Oligotropha carboxidovorans)).